Consider the following 270-residue polypeptide: Pyrroline-5-carboxylate reductase (270 aa).

Belongs to the pyrroline-5-carboxylate reductase family.

The protein localises to the cytoplasm. The enzyme catalyses L-proline + NADP(+) = (S)-1-pyrroline-5-carboxylate + NADPH + 2 H(+). The catalysed reaction is L-proline + NAD(+) = (S)-1-pyrroline-5-carboxylate + NADH + 2 H(+). It participates in amino-acid biosynthesis; L-proline biosynthesis; L-proline from L-glutamate 5-semialdehyde: step 1/1. Functionally, catalyzes the reduction of 1-pyrroline-5-carboxylate (PCA) to L-proline. The sequence is that of Pyrroline-5-carboxylate reductase from Corynebacterium melassecola.